The following is a 240-amino-acid chain: Uridylate kinase (240 aa).

Residue 15-18 (KLSG) participates in ATP binding. An involved in allosteric activation by GTP region spans residues 23-28 (GSEGFG). G57 contributes to the UMP binding site. Positions 58 and 62 each coordinate ATP. Residues D77 and 138–145 (TGNPFFTT) each bind UMP. ATP is bound by residues T165, Y171, and D174.

It belongs to the UMP kinase family. As to quaternary structure, homohexamer.

It is found in the cytoplasm. The enzyme catalyses UMP + ATP = UDP + ADP. Its pathway is pyrimidine metabolism; CTP biosynthesis via de novo pathway; UDP from UMP (UMPK route): step 1/1. Its activity is regulated as follows. Allosterically activated by GTP. Inhibited by UTP. In terms of biological role, catalyzes the reversible phosphorylation of UMP to UDP. The chain is Uridylate kinase from Photobacterium profundum (strain SS9).